Reading from the N-terminus, the 227-residue chain is PKHD-type hydroxylase Mfla_2317 (227 aa).

The 101-residue stretch at 78–178 (KVFPPLFNRY…RVSSFFWMQS (101 aa)) folds into the Fe2OG dioxygenase domain. Fe cation-binding residues include histidine 96, aspartate 98, and histidine 159. Arginine 169 is a 2-oxoglutarate binding site.

Requires Fe(2+) as cofactor. The cofactor is L-ascorbate.

In Methylobacillus flagellatus (strain ATCC 51484 / DSM 6875 / VKM B-1610 / KT), this protein is PKHD-type hydroxylase Mfla_2317.